The sequence spans 126 residues: Holo-[acyl-carrier-protein] synthase (126 aa).

Mg(2+) contacts are provided by Asp-9 and Glu-58.

It belongs to the P-Pant transferase superfamily. AcpS family. Requires Mg(2+) as cofactor.

The protein resides in the cytoplasm. It catalyses the reaction apo-[ACP] + CoA = holo-[ACP] + adenosine 3',5'-bisphosphate + H(+). In terms of biological role, transfers the 4'-phosphopantetheine moiety from coenzyme A to a Ser of acyl-carrier-protein. This Escherichia fergusonii (strain ATCC 35469 / DSM 13698 / CCUG 18766 / IAM 14443 / JCM 21226 / LMG 7866 / NBRC 102419 / NCTC 12128 / CDC 0568-73) protein is Holo-[acyl-carrier-protein] synthase.